The chain runs to 167 residues: Osteocalcin 2a (167 aa).

The signal sequence occupies residues 1–18; the sequence is MKSLTLLTICAVLSVSLS. Residues 19–118 constitute a propeptide that is removed on maturation; that stretch reads MNDLALDVVL…LASVLLRRKR (100 aa). The tract at residues 28–99 is disordered; sequence LDPAPDPATE…TTEDPAAATE (72 aa). Residues 38 to 87 are compositionally biased toward low complexity; the sequence is PAPAADSSASSSASSSSSSASDSSASASDSSDSDSSSASSSSSSSESASA. Residues 131 to 163 form the Gla domain; sequence QVESLSEVCELNLACEHMAETAGIVAAYTAYYG. Ca(2+) contacts are provided by E133, E137, and E140. Residues E133, E137, and E140 each carry the 4-carboxyglutamate modification. C139 and C145 form a disulfide bridge.

The protein belongs to the osteocalcin/matrix Gla protein family. Post-translationally, gamma-carboxyglutamate residues are formed by vitamin K dependent carboxylation. These residues are essential for the binding of calcium.

The protein localises to the secreted. Its function is as follows. Binds strongly to apatite and calcium. The sequence is that of Osteocalcin 2a from Oncorhynchus mykiss (Rainbow trout).